Consider the following 555-residue polypeptide: Formate--tetrahydrofolate ligase (555 aa).

65–72 (TPAGEGKS) serves as a coordination point for ATP.

It belongs to the formate--tetrahydrofolate ligase family.

It catalyses the reaction (6S)-5,6,7,8-tetrahydrofolate + formate + ATP = (6R)-10-formyltetrahydrofolate + ADP + phosphate. It participates in one-carbon metabolism; tetrahydrofolate interconversion. In Staphylococcus aureus (strain bovine RF122 / ET3-1), this protein is Formate--tetrahydrofolate ligase.